The primary structure comprises 109 residues: Flagellar hook-basal body complex protein FliE (109 aa).

This sequence belongs to the FliE family.

It is found in the bacterial flagellum basal body. In Stutzerimonas stutzeri (strain A1501) (Pseudomonas stutzeri), this protein is Flagellar hook-basal body complex protein FliE.